The following is a 230-amino-acid chain: ATP synthase subunit a (230 aa).

5 helical membrane-spanning segments follow: residues 17–37 (LPIT…FIMA), 78–98 (IFPF…IGVI), 107–127 (DLSV…WFGI), 165–187 (LFGN…GFLV), and 198–218 (EAII…AGGI).

It belongs to the ATPase A chain family. F-type ATPases have 2 components, CF(1) - the catalytic core - and CF(0) - the membrane proton channel. CF(1) has five subunits: alpha(3), beta(3), gamma(1), delta(1), epsilon(1). CF(0) has three main subunits: a(1), b(2) and c(9-12). The alpha and beta chains form an alternating ring which encloses part of the gamma chain. CF(1) is attached to CF(0) by a central stalk formed by the gamma and epsilon chains, while a peripheral stalk is formed by the delta and b chains.

The protein localises to the cell inner membrane. Key component of the proton channel; it plays a direct role in the translocation of protons across the membrane. This Legionella pneumophila (strain Corby) protein is ATP synthase subunit a.